We begin with the raw amino-acid sequence, 192 residues long: Phosphoheptose isomerase (192 aa).

One can recognise an SIS domain in the interval 37-192 (LADSFKGGGK…IQLIEKEMVK (156 aa)). Position 52 to 54 (52 to 54 (NGG)) interacts with substrate. Residues histidine 61 and glutamate 65 each contribute to the Zn(2+) site. Substrate contacts are provided by residues glutamate 65, 93 to 94 (ND), 119 to 121 (STS), serine 124, and glutamine 172. Positions 172 and 180 each coordinate Zn(2+).

Belongs to the SIS family. GmhA subfamily. In terms of assembly, homotetramer. It depends on Zn(2+) as a cofactor.

It localises to the cytoplasm. The enzyme catalyses 2 D-sedoheptulose 7-phosphate = D-glycero-alpha-D-manno-heptose 7-phosphate + D-glycero-beta-D-manno-heptose 7-phosphate. It participates in carbohydrate biosynthesis; D-glycero-D-manno-heptose 7-phosphate biosynthesis; D-glycero-alpha-D-manno-heptose 7-phosphate and D-glycero-beta-D-manno-heptose 7-phosphate from sedoheptulose 7-phosphate: step 1/1. Functionally, catalyzes the isomerization of sedoheptulose 7-phosphate in D-glycero-D-manno-heptose 7-phosphate. The chain is Phosphoheptose isomerase from Escherichia coli O7:K1 (strain IAI39 / ExPEC).